Consider the following 437-residue polypeptide: UDP-N-acetylmuramoylalanine--D-glutamate ligase (437 aa).

Residue glycine 112–threonine 118 participates in ATP binding.

It belongs to the MurCDEF family.

It localises to the cytoplasm. It catalyses the reaction UDP-N-acetyl-alpha-D-muramoyl-L-alanine + D-glutamate + ATP = UDP-N-acetyl-alpha-D-muramoyl-L-alanyl-D-glutamate + ADP + phosphate + H(+). It functions in the pathway cell wall biogenesis; peptidoglycan biosynthesis. Functionally, cell wall formation. Catalyzes the addition of glutamate to the nucleotide precursor UDP-N-acetylmuramoyl-L-alanine (UMA). The chain is UDP-N-acetylmuramoylalanine--D-glutamate ligase from Haemophilus influenzae (strain 86-028NP).